The primary structure comprises 91 residues: UPF0250 protein PSEEN4821 (91 aa).

Belongs to the UPF0250 family.

This is UPF0250 protein PSEEN4821 from Pseudomonas entomophila (strain L48).